The sequence spans 526 residues: Bifunctional purine biosynthesis protein PurH (526 aa).

The 147-residue stretch at 1-147 (MSSIKRALIS…KNWKHVAIVT (147 aa)) folds into the MGS-like domain.

The protein belongs to the PurH family.

The enzyme catalyses (6R)-10-formyltetrahydrofolate + 5-amino-1-(5-phospho-beta-D-ribosyl)imidazole-4-carboxamide = 5-formamido-1-(5-phospho-D-ribosyl)imidazole-4-carboxamide + (6S)-5,6,7,8-tetrahydrofolate. It catalyses the reaction IMP + H2O = 5-formamido-1-(5-phospho-D-ribosyl)imidazole-4-carboxamide. It functions in the pathway purine metabolism; IMP biosynthesis via de novo pathway; 5-formamido-1-(5-phospho-D-ribosyl)imidazole-4-carboxamide from 5-amino-1-(5-phospho-D-ribosyl)imidazole-4-carboxamide (10-formyl THF route): step 1/1. Its pathway is purine metabolism; IMP biosynthesis via de novo pathway; IMP from 5-formamido-1-(5-phospho-D-ribosyl)imidazole-4-carboxamide: step 1/1. This chain is Bifunctional purine biosynthesis protein PurH, found in Neisseria meningitidis serogroup B (strain ATCC BAA-335 / MC58).